Consider the following 293-residue polypeptide: MKLECIAPAKINLALHVIGRRTDGYHLLESLVAFAAFGDRLSVEKAEADTFLLAGPFRDGLEGSGNFVLNARDLLREKFASRASSPVAITLEKNLPVASGIGGGSSDAATGLKLLTRYWEIETEPAELAQIGLGLGADVPMCLFGQPLIASGIGEKLEPVSTLPSLPILLVNPGLPLATPAVFSSLVERENAPLPPAPRNKSAAELVNWLRLTRNDLEPAALSIMPVIGIVLRLLQTEGALIARMSGSGATCFGIFETASKARQAGEMISRRHPGWFVRATQTRASMPELSHV.

Lysine 10 is an active-site residue. 96 to 106 is an ATP binding site; sequence PVASGIGGGSS. Aspartate 138 is an active-site residue.

The protein belongs to the GHMP kinase family. IspE subfamily.

It carries out the reaction 4-CDP-2-C-methyl-D-erythritol + ATP = 4-CDP-2-C-methyl-D-erythritol 2-phosphate + ADP + H(+). It functions in the pathway isoprenoid biosynthesis; isopentenyl diphosphate biosynthesis via DXP pathway; isopentenyl diphosphate from 1-deoxy-D-xylulose 5-phosphate: step 3/6. In terms of biological role, catalyzes the phosphorylation of the position 2 hydroxy group of 4-diphosphocytidyl-2C-methyl-D-erythritol. This is 4-diphosphocytidyl-2-C-methyl-D-erythritol kinase from Chelativorans sp. (strain BNC1).